The chain runs to 230 residues: Phosphoribosylaminoimidazole-succinocarboxamide synthase (230 aa).

It belongs to the SAICAR synthetase family.

The enzyme catalyses 5-amino-1-(5-phospho-D-ribosyl)imidazole-4-carboxylate + L-aspartate + ATP = (2S)-2-[5-amino-1-(5-phospho-beta-D-ribosyl)imidazole-4-carboxamido]succinate + ADP + phosphate + 2 H(+). It participates in purine metabolism; IMP biosynthesis via de novo pathway; 5-amino-1-(5-phospho-D-ribosyl)imidazole-4-carboxamide from 5-amino-1-(5-phospho-D-ribosyl)imidazole-4-carboxylate: step 1/2. This Thermotoga petrophila (strain ATCC BAA-488 / DSM 13995 / JCM 10881 / RKU-1) protein is Phosphoribosylaminoimidazole-succinocarboxamide synthase.